Reading from the N-terminus, the 482-residue chain is Membrane-bound lytic murein transglycosylase F (482 aa).

Positions 1-18 (MKGLFIRIVLAICLSLWA) are cleaved as a signal peptide. The interval 19–266 (IDMVFPWQQI…RIEEKYFNHL (248 aa)) is non-LT domain. Residues 267 to 482 (NQFDYVDTRS…ISTQTQQEQR (216 aa)) form an LT domain region. Glu-311 is a catalytic residue.

This sequence in the N-terminal section; belongs to the bacterial solute-binding protein 3 family. In the C-terminal section; belongs to the transglycosylase Slt family.

The protein localises to the cell outer membrane. The enzyme catalyses Exolytic cleavage of the (1-&gt;4)-beta-glycosidic linkage between N-acetylmuramic acid (MurNAc) and N-acetylglucosamine (GlcNAc) residues in peptidoglycan, from either the reducing or the non-reducing ends of the peptidoglycan chains, with concomitant formation of a 1,6-anhydrobond in the MurNAc residue.. Murein-degrading enzyme that degrades murein glycan strands and insoluble, high-molecular weight murein sacculi, with the concomitant formation of a 1,6-anhydromuramoyl product. Lytic transglycosylases (LTs) play an integral role in the metabolism of the peptidoglycan (PG) sacculus. Their lytic action creates space within the PG sacculus to allow for its expansion as well as for the insertion of various structures such as secretion systems and flagella. The protein is Membrane-bound lytic murein transglycosylase F of Histophilus somni (strain 129Pt) (Haemophilus somnus).